Here is a 54-residue protein sequence, read N- to C-terminus: Light-harvesting protein B-800/850 alpha chain (54 aa).

Topologically, residues 1–14 are cytoplasmic; the sequence is MTNGKIWLVVKPTV. Residues 15-35 form a helical membrane-spanning segment; it reads GVPLFLSAAVIASVVIHAAVL. Histidine 31 lines the a bacteriochlorophyll pocket. At 36–54 the chain is on the periplasmic side; sequence TTTTWLPAYYQGSAAVAAE.

It belongs to the antenna complex alpha subunit family. In terms of assembly, the core complex is formed by different alpha and beta chains, binding bacteriochlorophyll molecules, and arranged most probably in tetrameric structures disposed around the reaction center. The non-pigmented gamma chains may constitute additional components.

It is found in the cell inner membrane. Its function is as follows. Antenna complexes are light-harvesting systems, which transfer the excitation energy to the reaction centers. This is Light-harvesting protein B-800/850 alpha chain (pucA) from Cereibacter sphaeroides (Rhodobacter sphaeroides).